Here is a 459-residue protein sequence, read N- to C-terminus: UDP-N-acetylmuramate--L-alanine ligase (459 aa).

118 to 124 (GTHGKTT) lines the ATP pocket.

The protein belongs to the MurCDEF family.

Its subcellular location is the cytoplasm. It catalyses the reaction UDP-N-acetyl-alpha-D-muramate + L-alanine + ATP = UDP-N-acetyl-alpha-D-muramoyl-L-alanine + ADP + phosphate + H(+). Its pathway is cell wall biogenesis; peptidoglycan biosynthesis. Functionally, cell wall formation. The protein is UDP-N-acetylmuramate--L-alanine ligase of Lachnospira eligens (strain ATCC 27750 / DSM 3376 / VPI C15-48 / C15-B4) (Eubacterium eligens).